A 574-amino-acid polypeptide reads, in one-letter code: Sodium/hydrogen exchanger 8 (574 aa).

11 helical membrane-spanning segments follow: residues M53–I73, L77–I97, P116–H136, L149–L169, F184–A204, L254–I274, G304–M324, V347–P367, S373–L393, M410–L430, and T444–I464.

The protein belongs to the monovalent cation:proton antiporter 1 (CPA1) transporter (TC 2.A.36) family.

It localises to the golgi apparatus membrane. In terms of biological role, involved in pH regulation to eliminate acids generated by active metabolism or to counter adverse environmental conditions. Major proton extruding system driven by the inward sodium ion chemical gradient. Plays an important role in signal transduction. This is Sodium/hydrogen exchanger 8 from Gallus gallus (Chicken).